The following is a 207-amino-acid chain: Small ribosomal subunit protein uS4 (207 aa).

Residues 31 to 54 are disordered; that stretch reads KCKLDTKPGQHGRTSGSRTSDYGN. Positions 42–53 are enriched in polar residues; the sequence is GRTSGSRTSDYG. One can recognise an S4 RNA-binding domain in the interval 97–158; sequence SRLDNVVYRM…KAKKQARITE (62 aa).

It belongs to the universal ribosomal protein uS4 family. As to quaternary structure, part of the 30S ribosomal subunit. Contacts protein S5. The interaction surface between S4 and S5 is involved in control of translational fidelity.

Its function is as follows. One of the primary rRNA binding proteins, it binds directly to 16S rRNA where it nucleates assembly of the body of the 30S subunit. With S5 and S12 plays an important role in translational accuracy. The chain is Small ribosomal subunit protein uS4 from Polynucleobacter asymbioticus (strain DSM 18221 / CIP 109841 / QLW-P1DMWA-1) (Polynucleobacter necessarius subsp. asymbioticus).